The sequence spans 1004 residues: Protein Wnt-5 (1004 aa).

An N-terminal signal peptide occupies residues 1 to 29; the sequence is MSCYRKRHFLLWLLRAVCMLHLTARGAYA. Asn-60, Asn-66, Asn-115, and Asn-219 each carry an N-linked (GlcNAc...) asparagine glycan. The tract at residues 238-298 is disordered; it reads QKDKAKTSGA…NPGEQPIGGY (61 aa). N-linked (GlcNAc...) asparagine glycosylation is found at Asn-307 and Asn-341. The disordered stretch occupies residues 310–407; it reads LLKPTDTDSH…ERDEWFRGQS (98 aa). A compositionally biased stretch (basic and acidic residues) spans 389-403; it reads RREEQQRQRERDEWF. An N-linked (GlcNAc...) asparagine glycan is attached at Asn-422. The disordered stretch occupies residues 438–472; that stretch reads KVSSEGSDGELLSRVERSQPSISSSSSSSSSSSRK. Over residues 458 to 470 the composition is skewed to low complexity; sequence SISSSSSSSSSSS. Asn-484, Asn-485, Asn-528, and Asn-593 each carry an N-linked (GlcNAc...) asparagine glycan. 3 disulfide bridges follow: Cys-583–Cys-594, Cys-633–Cys-641, and Cys-643–Cys-661. A glycan (N-linked (GlcNAc...) asparagine) is linked at Asn-724. The tract at residues 790–822 is disordered; the sequence is FFKGEQQPRKKKRKNQRAAADAPAYPRNGIKES. 8 cysteine pairs are disulfide-bonded: Cys-862–Cys-876, Cys-864–Cys-871, Cys-933–Cys-964, Cys-949–Cys-959, Cys-963–Cys-1003, Cys-979–Cys-994, Cys-981–Cys-991, and Cys-986–Cys-987. Ser-868 carries the O-palmitoleoyl serine; by PORCN lipid modification. A glycan (N-linked (GlcNAc...) asparagine) is linked at Asn-952.

It belongs to the Wnt family. In terms of assembly, interacts with porcupine (por). Glycosylated, glycosylation is stimulated by porcupine at the ER. In terms of processing, palmitoleoylated by porcupine. The lipid group functions as a sorting signal, targeting the ligand to polarized vesicles that transport Wnt5 to unique sites at the cell surface. Depalmitoleoylated by notum, leading to inhibit Wnt signaling pathway. In terms of tissue distribution, dynamic expression pattern during embryogenesis. Expression is seen in the limb primordia of the head and thoracic segments, mesodermal and neurogenic regions.

It localises to the secreted. The protein localises to the extracellular space. It is found in the extracellular matrix. Binds as a ligand to a family of frizzled seven-transmembrane receptors and acts through a cascade of genes on the nucleus. Probable developmental protein. May be a signaling molecule which affects the development of discrete regions of tissues. Is likely to signal over only few cell diameters. May have a role in limb and CNS development; may be a downstream target of Dll that acts in the specification of these primordia. The polypeptide is Protein Wnt-5 (Wnt5) (Drosophila melanogaster (Fruit fly)).